The primary structure comprises 379 residues: Lactosylceramide 1,3-N-acetyl-beta-D-glucosaminyltransferase A (379 aa).

The Cytoplasmic segment spans residues 1–12 (MFMNCRRVKKWH). The helical; Signal-anchor for type II membrane protein transmembrane segment at 13 to 30 (FLQLLSMCCVMSVLMVCW) threads the bilayer. The Lumenal portion of the chain corresponds to 31 to 379 (EHVDHHVVSH…NTYSCMAAFT (349 aa)). 4 N-linked (GlcNAc...) asparagine glycosylation sites follow: asparagine 57, asparagine 113, asparagine 168, and asparagine 277.

The protein belongs to the glycosyltransferase 31 family.

The protein resides in the golgi apparatus membrane. It catalyses the reaction a beta-D-Gal-(1-&gt;4)-beta-D-Glc-(1&lt;-&gt;1)-Cer(d18:1(4E)) + UDP-N-acetyl-alpha-D-glucosamine = a beta-D-GlcNAc-(1-&gt;3)-beta-D-Gal-(1-&gt;4)-beta-D-Glc-(1&lt;-&gt;1)-Cer(d18:1(4E)) + UDP + H(+). The catalysed reaction is a neolactoside nLc4Cer(d18:1(4E)) + UDP-N-acetyl-alpha-D-glucosamine = a neolactoside IV(3)-beta-GlcNAc-nLc4Cer(d18:1(4E)) + UDP + H(+). Its pathway is protein modification; protein glycosylation. In terms of biological role, beta-1,3-N-acetylglucosaminyltransferase that plays a key role in the synthesis of lacto- or neolacto-series carbohydrate chains on glycolipids. The chain is Lactosylceramide 1,3-N-acetyl-beta-D-glucosaminyltransferase A (b3gnt5a) from Danio rerio (Zebrafish).